The primary structure comprises 555 residues: CTP synthase (555 aa).

The interval 1–279 (MATNRAKSST…DNYIIRRLNL (279 aa)) is amidoligase domain. Ser21 is a CTP binding site. Ser21 is a binding site for UTP. Residues 22 to 27 (SLGKGL) and Asp79 contribute to the ATP site. Asp79 and Glu153 together coordinate Mg(2+). Residues 160 to 162 (DIE), 200 to 205 (KTKPTQ), and Lys236 each bind CTP. UTP-binding positions include 200 to 205 (KTKPTQ) and Lys236. A Glutamine amidotransferase type-1 domain is found at 304–553 (TIGIVGKYID…VDAALKHQAG (250 aa)). Gly367 contributes to the L-glutamine binding site. Cys394 functions as the Nucleophile; for glutamine hydrolysis in the catalytic mechanism. L-glutamine is bound by residues 395 to 398 (LGLQ), Glu417, and Arg478. Residues His526 and Glu528 contribute to the active site.

Belongs to the CTP synthase family. Homotetramer.

The catalysed reaction is UTP + L-glutamine + ATP + H2O = CTP + L-glutamate + ADP + phosphate + 2 H(+). It catalyses the reaction L-glutamine + H2O = L-glutamate + NH4(+). It carries out the reaction UTP + NH4(+) + ATP = CTP + ADP + phosphate + 2 H(+). It functions in the pathway pyrimidine metabolism; CTP biosynthesis via de novo pathway; CTP from UDP: step 2/2. Allosterically activated by GTP, when glutamine is the substrate; GTP has no effect on the reaction when ammonia is the substrate. The allosteric effector GTP functions by stabilizing the protein conformation that binds the tetrahedral intermediate(s) formed during glutamine hydrolysis. Inhibited by the product CTP, via allosteric rather than competitive inhibition. In terms of biological role, catalyzes the ATP-dependent amination of UTP to CTP with either L-glutamine or ammonia as the source of nitrogen. Regulates intracellular CTP levels through interactions with the four ribonucleotide triphosphates. This Corynebacterium jeikeium (strain K411) protein is CTP synthase.